The chain runs to 678 residues: DNA ligase (678 aa).

Residues 47–51 (DSDYD), 96–97 (SL), and glutamate 122 contribute to the NAD(+) site. Catalysis depends on lysine 124, which acts as the N6-AMP-lysine intermediate. NAD(+) is bound by residues arginine 145, glutamate 182, lysine 300, and lysine 324. The Zn(2+) site is built by cysteine 418, cysteine 421, cysteine 436, and cysteine 442. Residues 602-678 (AYNESFTGKT…ILEDNLKDLL (77 aa)) form the BRCT domain.

Belongs to the NAD-dependent DNA ligase family. LigA subfamily. Mg(2+) is required as a cofactor. Requires Mn(2+) as cofactor.

The catalysed reaction is NAD(+) + (deoxyribonucleotide)n-3'-hydroxyl + 5'-phospho-(deoxyribonucleotide)m = (deoxyribonucleotide)n+m + AMP + beta-nicotinamide D-nucleotide.. DNA ligase that catalyzes the formation of phosphodiester linkages between 5'-phosphoryl and 3'-hydroxyl groups in double-stranded DNA using NAD as a coenzyme and as the energy source for the reaction. It is essential for DNA replication and repair of damaged DNA. This chain is DNA ligase, found in Francisella tularensis subsp. holarctica (strain LVS).